We begin with the raw amino-acid sequence, 372 residues long: Spermidine/putrescine import ATP-binding protein PotA (372 aa).

The region spanning 12–250 is the ABC transporter domain; it reads VSIRSVRKVY…PRNRFVADFI (239 aa). 48–55 contacts ATP; it reads GPSGCGKT.

It belongs to the ABC transporter superfamily. Spermidine/putrescine importer (TC 3.A.1.11.1) family. In terms of assembly, the complex is composed of two ATP-binding proteins (PotA), two transmembrane proteins (PotB and PotC) and a solute-binding protein (PotD).

The protein resides in the cell inner membrane. It carries out the reaction ATP + H2O + polyamine-[polyamine-binding protein]Side 1 = ADP + phosphate + polyamineSide 2 + [polyamine-binding protein]Side 1.. Its function is as follows. Part of the ABC transporter complex PotABCD involved in spermidine/putrescine import. Responsible for energy coupling to the transport system. In Pseudomonas fluorescens (strain ATCC BAA-477 / NRRL B-23932 / Pf-5), this protein is Spermidine/putrescine import ATP-binding protein PotA.